A 148-amino-acid chain; its full sequence is Cytochrome c-type biogenesis protein CcmE (148 aa).

Topologically, residues 1 to 7 (MTRKQRR) are cytoplasmic. The chain crosses the membrane as a helical; Signal-anchor for type II membrane protein span at residues 8–28 (LYFVLLGMAALGGAVALVLTA). At 29 to 148 (ISDSLVYFYS…QWNDGKQPKQ (120 aa)) the chain is on the periplasmic side. Residues histidine 121 and tyrosine 125 each contribute to the heme site.

It belongs to the CcmE/CycJ family.

Its subcellular location is the cell inner membrane. In terms of biological role, heme chaperone required for the biogenesis of c-type cytochromes. Transiently binds heme delivered by CcmC and transfers the heme to apo-cytochromes in a process facilitated by CcmF and CcmH. This chain is Cytochrome c-type biogenesis protein CcmE, found in Paramagnetospirillum magneticum (strain ATCC 700264 / AMB-1) (Magnetospirillum magneticum).